We begin with the raw amino-acid sequence, 140 residues long: MIDIQGIKEALPHRYPMLLVDRVLEVSEDTIVAIKNVTINEPFFNGHFPQYPVMPGVLIMEALAQTAGVLELSKPENKGKLVFYAGMDKVKFKKQVVPGDQLVMTATFVKRRGTIAVVEAKAEVDGKLAASGTLTFAIGN.

The active site involves histidine 47.

Belongs to the thioester dehydratase family. FabZ subfamily.

It is found in the cytoplasm. The enzyme catalyses a (3R)-hydroxyacyl-[ACP] = a (2E)-enoyl-[ACP] + H2O. Functionally, involved in unsaturated fatty acids biosynthesis. Catalyzes the dehydration of short chain beta-hydroxyacyl-ACPs and long chain saturated and unsaturated beta-hydroxyacyl-ACPs. In Streptococcus pneumoniae (strain 70585), this protein is 3-hydroxyacyl-[acyl-carrier-protein] dehydratase FabZ.